Here is a 203-residue protein sequence, read N- to C-terminus: V-type ATP synthase subunit D (203 aa).

It belongs to the V-ATPase D subunit family.

Produces ATP from ADP in the presence of a proton gradient across the membrane. The protein is V-type ATP synthase subunit D of Streptococcus pneumoniae (strain Hungary19A-6).